Reading from the N-terminus, the 287-residue chain is Co-chaperone protein DjlA (287 aa).

The Periplasmic segment spans residues 1-6; that stretch reads MNFIGK. The chain crosses the membrane as a helical span at residues 7 to 30; that stretch reads FLGLIIGWKLGGFFGAICGVILGH. Residues 31–287 are Cytoplasmic-facing; the sequence is LGDKKLYELG…DLICKTKGWK (257 aa). The J domain occupies 221 to 287; the sequence is DAYKVLGVSA…DLICKTKGWK (67 aa).

In terms of assembly, homodimer.

It localises to the cell inner membrane. In terms of biological role, regulatory DnaK co-chaperone. Direct interaction between DnaK and DjlA is needed for the induction of the wcaABCDE operon, involved in the synthesis of a colanic acid polysaccharide capsule, possibly through activation of the RcsB/RcsC phosphotransfer signaling pathway. The colanic acid capsule may help the bacterium survive conditions outside the host. This is Co-chaperone protein DjlA from Pasteurella multocida (strain Pm70).